The following is a 96-amino-acid chain: Large ribosomal subunit protein uL23 (96 aa).

This sequence belongs to the universal ribosomal protein uL23 family. Part of the 50S ribosomal subunit. Contacts protein L29, and trigger factor when it is bound to the ribosome.

Functionally, one of the early assembly proteins it binds 23S rRNA. One of the proteins that surrounds the polypeptide exit tunnel on the outside of the ribosome. Forms the main docking site for trigger factor binding to the ribosome. This is Large ribosomal subunit protein uL23 from Maridesulfovibrio salexigens (strain ATCC 14822 / DSM 2638 / NCIMB 8403 / VKM B-1763) (Desulfovibrio salexigens).